Reading from the N-terminus, the 228-residue chain is 7-cyano-7-deazaguanine synthase (228 aa).

16–26 (FSGGQDSTTCL) serves as a coordination point for ATP. C193, C201, C204, and C207 together coordinate Zn(2+).

Belongs to the QueC family. Requires Zn(2+) as cofactor.

The catalysed reaction is 7-carboxy-7-deazaguanine + NH4(+) + ATP = 7-cyano-7-deazaguanine + ADP + phosphate + H2O + H(+). It participates in purine metabolism; 7-cyano-7-deazaguanine biosynthesis. Functionally, catalyzes the ATP-dependent conversion of 7-carboxy-7-deazaguanine (CDG) to 7-cyano-7-deazaguanine (preQ(0)). This is 7-cyano-7-deazaguanine synthase from Pasteurella multocida (strain Pm70).